The following is a 941-amino-acid chain: Isoleucine--tRNA ligase (941 aa).

The 'HIGH' region motif lies at 69-79 (PYANGDIHIGH). L-isoleucyl-5'-AMP is bound at residue glutamate 589. A 'KMSKS' region motif is present at residues 630 to 634 (KMSKS). Lysine 633 is an ATP binding site. Zn(2+) is bound by residues cysteine 915, cysteine 918, cysteine 932, and cysteine 935.

This sequence belongs to the class-I aminoacyl-tRNA synthetase family. IleS type 1 subfamily. In terms of assembly, monomer. Zn(2+) serves as cofactor.

It localises to the cytoplasm. The enzyme catalyses tRNA(Ile) + L-isoleucine + ATP = L-isoleucyl-tRNA(Ile) + AMP + diphosphate. Its function is as follows. Catalyzes the attachment of isoleucine to tRNA(Ile). As IleRS can inadvertently accommodate and process structurally similar amino acids such as valine, to avoid such errors it has two additional distinct tRNA(Ile)-dependent editing activities. One activity is designated as 'pretransfer' editing and involves the hydrolysis of activated Val-AMP. The other activity is designated 'posttransfer' editing and involves deacylation of mischarged Val-tRNA(Ile). The chain is Isoleucine--tRNA ligase from Zymomonas mobilis subsp. mobilis (strain ATCC 31821 / ZM4 / CP4).